Reading from the N-terminus, the 781-residue chain is Catalase-peroxidase (781 aa).

Residues 1–20 form the signal peptide; sequence MLYIYYLFKSLFFHTLFVFS. Positions 125–272 form a cross-link, tryptophyl-tyrosyl-methioninium (Trp-Tyr) (with M-298); that stretch reads WHSAGTYRIG…LAAVQMGLIY (148 aa). H126 acts as the Proton acceptor in catalysis. Residues 237-256 form a disordered region; the sequence is VHHPDEHRGAKEKAAKNSDS. Positions 272-298 form a cross-link, tryptophyl-tyrosyl-methioninium (Tyr-Met) (with W-125); sequence YVNPEGPDGRPDPLASARDIRETFARM. H313 contributes to the heme b binding site. The disordered stretch occupies residues 317-336; the sequence is KTHGAAPADNVGPEPEAGEL.

The protein belongs to the peroxidase family. Peroxidase/catalase subfamily. Homodimer or homotetramer. Requires heme b as cofactor. Post-translationally, formation of the three residue Trp-Tyr-Met cross-link is important for the catalase, but not the peroxidase activity of the enzyme.

The catalysed reaction is H2O2 + AH2 = A + 2 H2O. The enzyme catalyses 2 H2O2 = O2 + 2 H2O. In terms of biological role, bifunctional enzyme with both catalase and broad-spectrum peroxidase activity. The chain is Catalase-peroxidase from Xylella fastidiosa (strain 9a5c).